The sequence spans 362 residues: 3-dehydroquinate synthase (362 aa).

Residues 71–76, 105–109, 129–130, lysine 142, lysine 151, and 169–172 contribute to the NAD(+) site; these read DGEQYK, GVVGD, TT, and CLKT. Positions 184, 247, and 264 each coordinate Zn(2+).

This sequence belongs to the sugar phosphate cyclases superfamily. Dehydroquinate synthase family. The cofactor is Co(2+). Zn(2+) is required as a cofactor. Requires NAD(+) as cofactor.

It is found in the cytoplasm. It catalyses the reaction 7-phospho-2-dehydro-3-deoxy-D-arabino-heptonate = 3-dehydroquinate + phosphate. The protein operates within metabolic intermediate biosynthesis; chorismate biosynthesis; chorismate from D-erythrose 4-phosphate and phosphoenolpyruvate: step 2/7. Catalyzes the conversion of 3-deoxy-D-arabino-heptulosonate 7-phosphate (DAHP) to dehydroquinate (DHQ). In Shigella flexneri serotype 5b (strain 8401), this protein is 3-dehydroquinate synthase.